A 305-amino-acid chain; its full sequence is Oxidoreductase swnR (305 aa).

This sequence belongs to the NmrA-type oxidoreductase family. Isoflavone reductase subfamily.

The enzyme catalyses L-pipecolate + O2 = L-1-piperideine-6-carboxylate + H2O2 + H(+). It participates in mycotoxin biosynthesis. Oxidoreductase; part of the gene cluster that mediates the biosynthesis of swainsonine (SW), a cytotoxic fungal alkaloid and a potential cancer therapy drug. Swainsonine production occurs via a multibranched pathway and is dispensable for fungal colonization of plants and infection of insect hosts. The first step of swainsonine biosynthesis is the production of the precursor pipecolic acid (PA) via conversion of L-lysine (Lys) to 1-piperideine-6-carboxylate (P6C) by the aminotransferase swnA, the latter being further reduced to PA by the reductase swnR. The PKS-NRPS hybrid synthetase swnK uptakes and condensates PA and malonyl-CoA with and without skipping of the ketoreductase (KR) domain in order to produce 3 intermediates, 1-oxoindolizidine, (1S)-1-hydroxyindolizin, and (1R)-1-hydroxyindolizine; with the transisomer (1S)-1-hydroxyindolizin being predominant. The terminal thioester reductase (TE) domain of swnK is involved in reduction of the thioester bond to release the intermediate aldehydes. The oxidoreductase swnN could contribute to the reduction of 1-oxoindolizidine to (1S)-1-hydroxyindolizin and (1R)-1-hydroxyindolizine, contributing to the major route of SW production. The dioxygenase swnH2 would be responsible for the oxidization of (1R)-1-hydroxyindolizine into (1R,2S)-1,2-dihydroxyindolizine and of (1S)-1-hydroxyindolizin to yield both (1R,2S)-1,2-dihydroxyindolizine and (1S,2S)-1,2-dihydroxyindolizine. The dioxygenase swnH1 then performs the conversion of the 1,2-dihydroxyindolizine epimers to SW. The chain is Oxidoreductase swnR from Arthroderma benhamiae (strain ATCC MYA-4681 / CBS 112371) (Trichophyton mentagrophytes).